The chain runs to 228 residues: Ribulose-phosphate 3-epimerase (228 aa).

Serine 9 provides a ligand contact to substrate. The a divalent metal cation site is built by histidine 34, aspartate 36, and histidine 70. Residue aspartate 36 is the Proton acceptor of the active site. Substrate is bound by residues histidine 70, 146–149 (GFPG), 179–181 (DGG), and 201–202 (GS). Aspartate 179 contacts a divalent metal cation. Aspartate 179 acts as the Proton donor in catalysis.

This sequence belongs to the ribulose-phosphate 3-epimerase family. A divalent metal cation is required as a cofactor.

It carries out the reaction D-ribulose 5-phosphate = D-xylulose 5-phosphate. The protein operates within carbohydrate degradation. Its function is as follows. Catalyzes the reversible epimerization of D-ribulose 5-phosphate to D-xylulose 5-phosphate. The sequence is that of Ribulose-phosphate 3-epimerase from Buchnera aphidicola subsp. Baizongia pistaciae (strain Bp).